The following is an 845-amino-acid chain: MKYDHQQIEAKWQKFWQDNQTYRSDDNFQKPKYYVLDMFPYPSGAGLHVGHVVGYTATDIIARYMRTKGYNVMHPMGWDSFGLPAEQYAIRTGTHPAESTQENINNYRRQLRALGFSYDWNRELATSDPNYYKWTQWIFTKLYEKGLAYEAEMLVNYCPALGTVLANEEIENGKTKDGGHPVERRPLKQWILKITAYADRLLQDLDLLDWPESLKKLQINWIGKSEGAYVQFIEKTTQEAFSVFTTRPDTLFGVSYLVLAPEHPLVSHITASSQQQAVRAYQAQIASKSDLDRTELNRDKTGVFTGAYAVNPVNHKEIPIWISDYVLMNVGTGAIMAVPAHDERDFEFAKTFKLPIIPVYDPVCEEITIRNQVLAGQQCWPGHGICVNSACGDLSLNGLNLDQAKKIVINWLEINHKGKSATTYKLRDWLFSRQRYWGEPFPLLKFEDGSVRLLDEDELPLCPPAITNYKPTGDGKGPLTQIKEWVEIIDTKTGKKAFRDTNIMPQWAGSCWYYLRFCDPHNTEKAFSPEKEKYWLPVDLYIGGVEHAVLHLLYARFWHKVLYDCGYVHTLEPFQTLRNQGLVVARSYQNKMRVYVEPRYVEQRDGKYFDSRTGEELTSQIDKMSKSKLNGESPDEIIQEYGADALRLYEMFMGPLEKEKVWNTDAVSGTRRFLNRFYEMAFSDKVTNETSEEGLKLGHRLVHSVMKDMELLQFNTAIAKMMEFINEFTKLVTYPKQVIQMATQVLAPFAPHLAEEVWEHLKCEGSLSFTPYPQVEEKYLQENVITYVVQINGKVRGRFDLPKDQTQENVLEAAKNNPHIQQYINKKEIGKVVFVPNKLLSIVLR.

A 'HIGH' region motif is present at residues 40 to 51; it reads PYPSGAGLHVGH. Positions 623-627 match the 'KMSKS' region motif; sequence KMSKS. K626 contributes to the ATP binding site.

Belongs to the class-I aminoacyl-tRNA synthetase family.

The protein resides in the cytoplasm. It carries out the reaction tRNA(Leu) + L-leucine + ATP = L-leucyl-tRNA(Leu) + AMP + diphosphate. This Protochlamydia amoebophila (strain UWE25) protein is Leucine--tRNA ligase.